The chain runs to 212 residues: Adenylate kinase (212 aa).

10-15 is a binding site for ATP; sequence GAGKGT. The tract at residues 30-59 is NMP; sequence AIGDIFRTIIKTSTSEAELINNYVRQGELI. AMP contacts are provided by residues Arg36, 57 to 59, 85 to 88, and Gln92; these read ELI and GYPR. The interval 122-160 is LID; that stretch reads GRYSCKNCGKIYNRYFLQPKTDNVCDVCGSSTFDYRKDD. Arg123 contacts ATP. Zn(2+)-binding residues include Cys126 and Cys129. Position 132–133 (132–133) interacts with ATP; the sequence is IY. Residues Cys146 and Cys149 each contribute to the Zn(2+) site. Positions 157 and 168 each coordinate AMP. Lys196 serves as a coordination point for ATP.

The protein belongs to the adenylate kinase family. Monomer.

It is found in the cytoplasm. It carries out the reaction AMP + ATP = 2 ADP. It participates in purine metabolism; AMP biosynthesis via salvage pathway; AMP from ADP: step 1/1. Catalyzes the reversible transfer of the terminal phosphate group between ATP and AMP. Plays an important role in cellular energy homeostasis and in adenine nucleotide metabolism. In Rickettsia peacockii (strain Rustic), this protein is Adenylate kinase.